The sequence spans 157 residues: 2-C-methyl-D-erythritol 2,4-cyclodiphosphate synthase (157 aa).

Residues Asp8 and His10 each coordinate a divalent metal cation. 4-CDP-2-C-methyl-D-erythritol 2-phosphate contacts are provided by residues 8–10 and 34–35; these read DIH and HS. His42 serves as a coordination point for a divalent metal cation. 4-CDP-2-C-methyl-D-erythritol 2-phosphate is bound by residues 56–58 and 132–135; these read DIG and TTNE.

Belongs to the IspF family. In terms of assembly, homotrimer. A divalent metal cation serves as cofactor.

The enzyme catalyses 4-CDP-2-C-methyl-D-erythritol 2-phosphate = 2-C-methyl-D-erythritol 2,4-cyclic diphosphate + CMP. It participates in isoprenoid biosynthesis; isopentenyl diphosphate biosynthesis via DXP pathway; isopentenyl diphosphate from 1-deoxy-D-xylulose 5-phosphate: step 4/6. In terms of biological role, involved in the biosynthesis of isopentenyl diphosphate (IPP) and dimethylallyl diphosphate (DMAPP), two major building blocks of isoprenoid compounds. Catalyzes the conversion of 4-diphosphocytidyl-2-C-methyl-D-erythritol 2-phosphate (CDP-ME2P) to 2-C-methyl-D-erythritol 2,4-cyclodiphosphate (ME-CPP) with a corresponding release of cytidine 5-monophosphate (CMP). This Synechococcus sp. (strain JA-3-3Ab) (Cyanobacteria bacterium Yellowstone A-Prime) protein is 2-C-methyl-D-erythritol 2,4-cyclodiphosphate synthase.